A 283-amino-acid chain; its full sequence is Acetylglutamate kinase (283 aa).

Residues G64–G65, R86, and N178 each bind substrate.

Belongs to the acetylglutamate kinase family. ArgB subfamily.

The protein localises to the cytoplasm. The catalysed reaction is N-acetyl-L-glutamate + ATP = N-acetyl-L-glutamyl 5-phosphate + ADP. The protein operates within amino-acid biosynthesis; L-arginine biosynthesis; N(2)-acetyl-L-ornithine from L-glutamate: step 2/4. Functionally, catalyzes the ATP-dependent phosphorylation of N-acetyl-L-glutamate. This is Acetylglutamate kinase from Lactococcus lactis subsp. lactis (strain IL1403) (Streptococcus lactis).